Here is a 410-residue protein sequence, read N- to C-terminus: Multifunctional CCA protein (410 aa).

2 residues coordinate ATP: Gly-8 and Arg-11. The CTP site is built by Gly-8 and Arg-11. Mg(2+) contacts are provided by Asp-21 and Asp-23. Arg-91, Arg-143, and Arg-146 together coordinate ATP. CTP-binding residues include Arg-91, Arg-143, and Arg-146. The 102-residue stretch at 232-333 (TGVHVMMVVD…VRLLERSDAI (102 aa)) folds into the HD domain.

Belongs to the tRNA nucleotidyltransferase/poly(A) polymerase family. Bacterial CCA-adding enzyme type 1 subfamily. Monomer. Can also form homodimers and oligomers. Requires Mg(2+) as cofactor. Ni(2+) is required as a cofactor.

The enzyme catalyses a tRNA precursor + 2 CTP + ATP = a tRNA with a 3' CCA end + 3 diphosphate. It carries out the reaction a tRNA with a 3' CCA end + 2 CTP + ATP = a tRNA with a 3' CCACCA end + 3 diphosphate. Functionally, catalyzes the addition and repair of the essential 3'-terminal CCA sequence in tRNAs without using a nucleic acid template. Adds these three nucleotides in the order of C, C, and A to the tRNA nucleotide-73, using CTP and ATP as substrates and producing inorganic pyrophosphate. tRNA 3'-terminal CCA addition is required both for tRNA processing and repair. Also involved in tRNA surveillance by mediating tandem CCA addition to generate a CCACCA at the 3' terminus of unstable tRNAs. While stable tRNAs receive only 3'-terminal CCA, unstable tRNAs are marked with CCACCA and rapidly degraded. This is Multifunctional CCA protein from Paraburkholderia phytofirmans (strain DSM 17436 / LMG 22146 / PsJN) (Burkholderia phytofirmans).